The sequence spans 221 residues: Ras-related protein Rab-28 (221 aa).

Ser-2 bears the N-acetylserine mark. Ser-8 is modified (phosphoserine). Residues Gly-21, Gly-24, Lys-25, Thr-26, Ser-27, Gly-38, Lys-39, Tyr-41, and Thr-44 each contribute to the GTP site. Mg(2+) is bound at residue Thr-26. The tract at residues 35-49 is switch I; sequence ETFGKQYKQTIGLDF. Mg(2+) is bound by residues Thr-44 and Asp-68. The interval 68–85 is switch II; sequence DIGGQTIGGKMLDKYIYG. Residues Gly-71, Asn-129, Lys-130, Asp-132, Ala-160, and Lys-161 each coordinate GTP. At Cys-218 the chain carries Cysteine methyl ester. Cys-218 is lipidated: S-farnesyl cysteine. Residues 219-221 constitute a propeptide, removed in mature form; the sequence is AVQ.

The protein belongs to the small GTPase superfamily. Rab family. In terms of assembly, interacts (prenylated form) with PDE6D; the interaction promotes RAB28 delivery to the photoreceptor outer segments. Interacts with KCNJ13; the interaction may facilitate cone outer segments phagocytosis. Interacts with RELA; the interaction contributes to RELA transport from cytoplasm to nucleus. Mg(2+) serves as cofactor. Post-translationally, isoprenylated. Testis, brain, and to much lower levels heart, skeletal muscle and fat cells. Expressed in the retina.

It localises to the cell membrane. The protein localises to the cytoplasm. The protein resides in the cytoskeleton. Its subcellular location is the cilium basal body. It is found in the nucleus. The enzyme catalyses GTP + H2O = GDP + phosphate + H(+). Regulated by guanine nucleotide exchange factors (GEFs) which promote the exchange of bound GDP for free GTP. Regulated by GTPase activating proteins (GAPs) which increase the GTP hydrolysis activity. Inhibited by GDP dissociation inhibitors (GDIs). Functionally, the small GTPases Rab are key regulators of intracellular membrane trafficking, from the formation of transport vesicles to their fusion with membranes. Rabs cycle between an inactive GDP-bound form and an active GTP-bound form that is able to recruit to membranes different sets of downstream effectors directly responsible for vesicle formation, movement, tethering and fusion. RAB28 is required for shedding and phagocytosis of cone cell outer segments (OS) discs in the retina. Also participates in nuclear factor kappa-B p65/RELA nuclear transport in endothelial cells. In Rattus norvegicus (Rat), this protein is Ras-related protein Rab-28.